Reading from the N-terminus, the 431-residue chain is Histidinol dehydrogenase 1 (431 aa).

Tyr127, Gln188, and Asn211 together coordinate NAD(+). Residues Ser234, Gln256, and His259 each coordinate substrate. 2 residues coordinate Zn(2+): Gln256 and His259. Active-site proton acceptor residues include Glu324 and His325. Positions 325, 358, 412, and 417 each coordinate substrate. Residue Asp358 coordinates Zn(2+). His417 is a Zn(2+) binding site.

This sequence belongs to the histidinol dehydrogenase family. Zn(2+) serves as cofactor.

It catalyses the reaction L-histidinol + 2 NAD(+) + H2O = L-histidine + 2 NADH + 3 H(+). It functions in the pathway amino-acid biosynthesis; L-histidine biosynthesis; L-histidine from 5-phospho-alpha-D-ribose 1-diphosphate: step 9/9. In terms of biological role, catalyzes the sequential NAD-dependent oxidations of L-histidinol to L-histidinaldehyde and then to L-histidine. The chain is Histidinol dehydrogenase 1 from Trichormus variabilis (strain ATCC 29413 / PCC 7937) (Anabaena variabilis).